We begin with the raw amino-acid sequence, 217 residues long: 3,4-dihydroxy-2-butanone 4-phosphate synthase (217 aa).

Residues 37–38, Asp-42, 150–154, and Glu-174 each bind D-ribulose 5-phosphate; these read RE and RGGHT. Glu-38 lines the Mg(2+) pocket. Residue His-153 coordinates Mg(2+).

The protein belongs to the DHBP synthase family. As to quaternary structure, homodimer. Requires Mg(2+) as cofactor. It depends on Mn(2+) as a cofactor.

The catalysed reaction is D-ribulose 5-phosphate = (2S)-2-hydroxy-3-oxobutyl phosphate + formate + H(+). It functions in the pathway cofactor biosynthesis; riboflavin biosynthesis; 2-hydroxy-3-oxobutyl phosphate from D-ribulose 5-phosphate: step 1/1. Catalyzes the conversion of D-ribulose 5-phosphate to formate and 3,4-dihydroxy-2-butanone 4-phosphate. The sequence is that of 3,4-dihydroxy-2-butanone 4-phosphate synthase from Proteus mirabilis (strain HI4320).